We begin with the raw amino-acid sequence, 522 residues long: Sterol O-acyltransferase 2 (522 aa).

Disordered regions lie at residues 1-36 (MEPG…HRAP) and 74-96 (SYPS…TQEP). Topologically, residues 1–120 (MEPGGARLRL…LDELMEVQHF (120 aa)) are cytoplasmic. Over residues 17–36 (GGERERQPCGDGNTETHRAP) the composition is skewed to basic and acidic residues. Position 119 (histidine 119) interacts with cholesterol. Residues 121–142 (RTIYHMFIAGLCVFIISTLAID) form a helical membrane-spanning segment. Over 143-162 (FIDEGRLLLEFDLLIFSFGQ) the chain is Lumenal. A helical membrane pass occupies residues 163-188 (LPLALVTWVPMFLSTLLAPYQALRLW). Over 189–196 (ARGTWTQA) the chain is Cytoplasmic. A helical membrane pass occupies residues 197–220 (TGLGCALLAAHAVVLCALPVHVAV). Over 221–228 (EHQLPPAS) the chain is Lumenal. A helical membrane pass occupies residues 229-252 (RCVLVFEQVRFLMKSYSFLREAVP). The Cytoplasmic segment spans residues 253-293 (GTLRARRGEGIQAPSFSSYLYFLFCPTLIYRETYPRTPYVR). Cysteine 277 bears the Cysteine sulfenic acid (-SOH); alternate mark. Residue cysteine 277 forms a Glycyl cysteine thioester (Cys-Gly) (interchain with G-Cter in ubiquitin); alternate linkage. Residues 294–326 (WNYVAKNFAQALGCVLYACFILGRLCVPVFANM) form a helical membrane-spanning segment. Residues 327–343 (SREPFSTRALVLSILHA) are Lumenal-facing. The helical transmembrane segment at 344-369 (TLPGIFMLLLIFFAFLHCWLNAFAEM) threads the bilayer. The Cytoplasmic portion of the chain corresponds to 370–417 (LRFGDRMFYRDWWNSTSFSNYYRTWNVVVHDWLYSYVYQDGLRLLGAR). An FYXDWWN motif motif is present at residues 377-383 (FYRDWWN). An acyl-CoA is bound by residues asparagine 389, arginine 392, asparagine 395, histidine 399, tyrosine 407, and serine 430. Residues 418-442 (ARGVAMLGVFLVSAVAHEYIFCFVL) form a helical membrane-spanning segment. Histidine 434 is an active-site residue. The Lumenal portion of the chain corresponds to 443-448 (GFFYPV). Residues 449-464 (MLILFLVIGGMLNFMM) form a helical membrane-spanning segment. The Cytoplasmic segment spans residues 465–470 (HDQRTG). The helical transmembrane segment at 471 to 502 (PAWNVLMWTMLFLGQGIQVSLYCQEWYARRHC) threads the bilayer. Topologically, residues 503 to 522 (PLPQATFWGLVTPRSWSCHT) are lumenal.

This sequence belongs to the membrane-bound acyltransferase family. Sterol o-acyltransferase subfamily. May form homo- or heterodimers. Interacts with INSIG1; the interaction is direct and promotes association with AMFR/gp78. Polyubiquitinated by AMFR/gp78 at Cys-277, leading to its degradation when the lipid levels are low. Association with AMFR/gp78 is mediated via interaction with INSIG1. High concentration of cholesterol and fatty acid results in Cys-277 oxidation, preventing ubiquitination at the same site, resulting in protein stabilization. In terms of processing, oxidized at Cys-277: high concentration of cholesterol and fatty acid induce reactive oxygen species, which oxidizes Cys-277, preventing ubiquitination at the same site, and resulting in protein stabilization. As to expression, expression seems confined in hepatocytes and enterocytes.

Its subcellular location is the endoplasmic reticulum membrane. The catalysed reaction is a sterol + a long-chain fatty acyl-CoA = a long-chain 3-hydroxysterol ester + CoA. The enzyme catalyses cholesterol + an acyl-CoA = a cholesterol ester + CoA. It carries out the reaction cholesterol + (9Z)-octadecenoyl-CoA = cholesteryl (9Z-octadecenoate) + CoA. It catalyses the reaction (5Z,8Z,11Z,14Z,17Z)-eicosapentaenoyl-CoA + cholesterol = (5Z,8Z,11Z,14Z,17Z-eicosapentaenoyl)-cholesterol + CoA. The catalysed reaction is (9Z,12Z,15Z)-octadecatrienoyl-CoA + cholesterol = (9Z,12Z,15Z-octadecatrienoyl)-cholesterol + CoA. The enzyme catalyses (5Z,8Z,11Z,14Z)-eicosatetraenoyl-CoA + cholesterol = cholesteryl (5Z,8Z,11Z,14Z)-eicosatetraenoate + CoA. Catalyzes the formation of fatty acid-cholesterol esters, which are less soluble in membranes than cholesterol. Plays a role in lipoprotein assembly and dietary cholesterol absorption. Utilizes oleoyl-CoA ((9Z)-octadecenoyl-CoA) and linolenoyl-CoA ((9Z,12Z,15Z)-octadecatrienoyl-CoA) as substrates. May provide cholesteryl esters for lipoprotein secretion from hepatocytes and intestinal mucosa. Its function is as follows. Has lower enzymatic activity compared to isoform 1. The polypeptide is Sterol O-acyltransferase 2 (Homo sapiens (Human)).